The chain runs to 323 residues: MTKSAKIGVLLANLGTPDSPTPKSISRYLWQFLTDPRVVDLPRCKWYPLLKAIILPLRSKRIAKNYQAIWTEQGSPLLAISRQQKDALQAYLDTQNINAQVEIAMTYGNPSIQSAVKNLLKNQVERIIVLPLYPQYSSSTTGAVFDAFANALKEERGLVPFDFIHSYHIDENYINALANSIKVRLKSDEFLLFSYHGIPLRYEKMGDYYREHCKQTTIAVVNKLGLTENQWGMTFQSRFGREEWLQPYTDKFLESAATQNIQKIAVICPGFSVDCLETIEEIDKENRENFLKNGGQSYQYIPALNVEHAHIEMMGKLILEKLA.

Histidine 196 and glutamate 277 together coordinate Fe cation.

It belongs to the ferrochelatase family.

Its subcellular location is the cytoplasm. It catalyses the reaction heme b + 2 H(+) = protoporphyrin IX + Fe(2+). The protein operates within porphyrin-containing compound metabolism; protoheme biosynthesis; protoheme from protoporphyrin-IX: step 1/1. Catalyzes the ferrous insertion into protoporphyrin IX. This Haemophilus influenzae (strain PittEE) protein is Ferrochelatase.